Consider the following 271-residue polypeptide: Phosphatidylglycerol--prolipoprotein diacylglyceryl transferase (271 aa).

Transmembrane regions (helical) follow at residues Ile18–Leu38, Tyr60–Tyr80, Phe103–Tyr123, Leu137–Leu157, Pro181–Ile201, Gly209–Phe229, and Ile236–Leu256. Arg152 contacts a 1,2-diacyl-sn-glycero-3-phospho-(1'-sn-glycerol).

This sequence belongs to the Lgt family.

It localises to the cell inner membrane. It catalyses the reaction L-cysteinyl-[prolipoprotein] + a 1,2-diacyl-sn-glycero-3-phospho-(1'-sn-glycerol) = an S-1,2-diacyl-sn-glyceryl-L-cysteinyl-[prolipoprotein] + sn-glycerol 1-phosphate + H(+). It participates in protein modification; lipoprotein biosynthesis (diacylglyceryl transfer). In terms of biological role, catalyzes the transfer of the diacylglyceryl group from phosphatidylglycerol to the sulfhydryl group of the N-terminal cysteine of a prolipoprotein, the first step in the formation of mature lipoproteins. In Campylobacter lari (strain RM2100 / D67 / ATCC BAA-1060), this protein is Phosphatidylglycerol--prolipoprotein diacylglyceryl transferase.